Reading from the N-terminus, the 878-residue chain is Pyruvate, phosphate dikinase (878 aa).

The N-terminal stretch occupies residues 1–347 (MKKLIYYFGS…LYILQTRTAK (347 aa)). ATP is bound at residue Arg-96. The segment at 348-404 (RTAIAAIKIAVQMVEEKLISKEQALMRIDPESLNQLLHTRIDYSKGLTSIADGLPAS) is linker 1. Residues 405–502 (PGAATGIIVF…ILKQDDIITI (98 aa)) are central. Thr-457 bears the Phosphothreonine; by PDRP1 mark. His-459 functions as the Tele-phosphohistidine intermediate in the catalytic mechanism. Positions 503 to 537 (DGGTGKVFLGAVPLIQPTFSEESKLILEWADETSK) are linker 2. Positions 538–878 (LKIRTNAETV…AAAQAKIKHG (341 aa)) are C-terminal. Positions 565, 621, 749, 770, 771, 772, and 773 each coordinate substrate. Mg(2+) is bound at residue Glu-749. Asp-773 serves as a coordination point for Mg(2+). Catalysis depends on Cys-835, which acts as the Proton donor.

It belongs to the PEP-utilizing enzyme family. Homodimer. The cofactor is Mg(2+). Post-translationally, phosphorylation of Thr-457 in the dark inactivates the enzyme. Dephosphorylation upon light stimulation reactivates the enzyme.

It catalyses the reaction pyruvate + phosphate + ATP = phosphoenolpyruvate + AMP + diphosphate + H(+). Its activity is regulated as follows. Activated by light-induced dephosphorylation. Inhibited by dark-induced phosphorylation. Both reactions are catalyzed by PDRP1. In terms of biological role, catalyzes the reversible phosphorylation of pyruvate and phosphate. This Rickettsia bellii (strain RML369-C) protein is Pyruvate, phosphate dikinase (ppdK).